A 307-amino-acid chain; its full sequence is Agmatinase (307 aa).

Mn(2+) contacts are provided by His-128, Asp-151, His-153, Asp-155, Asp-232, and Asp-234.

It belongs to the arginase family. Agmatinase subfamily. Mn(2+) serves as cofactor.

The enzyme catalyses agmatine + H2O = urea + putrescine. It functions in the pathway amine and polyamine biosynthesis; putrescine biosynthesis via agmatine pathway; putrescine from agmatine: step 1/1. Functionally, catalyzes the formation of putrescine from agmatine. This chain is Agmatinase, found in Neisseria meningitidis serogroup C (strain 053442).